A 153-amino-acid chain; its full sequence is UPF0266 membrane protein YE1773 (153 aa).

Transmembrane regions (helical) follow at residues 6–26 (IVLI…EFIM), 45–65 (IDCA…VMAN), and 67–87 (EPLT…LSYI).

This sequence belongs to the UPF0266 family.

The protein localises to the cell inner membrane. The protein is UPF0266 membrane protein YE1773 of Yersinia enterocolitica serotype O:8 / biotype 1B (strain NCTC 13174 / 8081).